Consider the following 384-residue polypeptide: MAKHLFTSESVSEGHPDKIADQISDAVLDAILEQDPKARVACETYVKTGMVLVGGEITTSAWVDIEEITRNTVREIGYVHSDMGFDANSCAVLSAIGKQSPDINQGVDRADPLEQGAGDQGLMFGYATNETDVLMPAPITYAHRLVQRQAEVRKNGTLPWLRPDAKSQVTFQYDDGKIVGIDAVVLSTQHAEEIDQKSLQEAVMEEIIKPILPSEWLNASTKFFINPTGRFVIGGPMGDCGLTGRKIIVDTYGGMARHGGGAFSGKDPSKVDRSAAYAARYVAKNIVAAGLADRCEIQVSYAIGVAEPTSIMVETFGTEKVPSEQLTLLVREFFDLRPYGLIQMLDLLHPIYKETAAYGHFGREHFPWEKTDKAQLLRDAAGLK.

His15 lines the ATP pocket. Asp17 provides a ligand contact to Mg(2+). Glu43 is a binding site for K(+). The L-methionine site is built by Glu56 and Gln99. The flexible loop stretch occupies residues 99-109 (QSPDINQGVDR). Residues 164–166 (DAK), 230–231 (RF), Asp239, 245–246 (RK), Ala262, and Lys266 each bind ATP. An L-methionine-binding site is contributed by Asp239. L-methionine is bound at residue Lys270.

This sequence belongs to the AdoMet synthase family. In terms of assembly, homotetramer; dimer of dimers. Mg(2+) serves as cofactor. K(+) is required as a cofactor.

It localises to the cytoplasm. The enzyme catalyses L-methionine + ATP + H2O = S-adenosyl-L-methionine + phosphate + diphosphate. It functions in the pathway amino-acid biosynthesis; S-adenosyl-L-methionine biosynthesis; S-adenosyl-L-methionine from L-methionine: step 1/1. Functionally, catalyzes the formation of S-adenosylmethionine (AdoMet) from methionine and ATP. The overall synthetic reaction is composed of two sequential steps, AdoMet formation and the subsequent tripolyphosphate hydrolysis which occurs prior to release of AdoMet from the enzyme. The chain is S-adenosylmethionine synthase from Citrobacter koseri (strain ATCC BAA-895 / CDC 4225-83 / SGSC4696).